We begin with the raw amino-acid sequence, 463 residues long: Cytoplasmic tRNA 2-thiolation protein 2 (463 aa).

Belongs to the CTU2/NCS2 family.

Its subcellular location is the cytoplasm. It participates in tRNA modification; 5-methoxycarbonylmethyl-2-thiouridine-tRNA biosynthesis. Its function is as follows. Plays a central role in 2-thiolation of mcm(5)S(2)U at tRNA wobble positions of tRNA(Lys), tRNA(Glu) and tRNA(Gln). May act by forming a heterodimer with NCS6 that ligates sulfur from thiocarboxylated URM1 onto the uridine of tRNAs at wobble position. Prior mcm(5) tRNA modification by the elongator complex is required for 2-thiolation. May also be involved in protein urmylation. The chain is Cytoplasmic tRNA 2-thiolation protein 2 from Kluyveromyces lactis (strain ATCC 8585 / CBS 2359 / DSM 70799 / NBRC 1267 / NRRL Y-1140 / WM37) (Yeast).